We begin with the raw amino-acid sequence, 485 residues long: Inosine-5'-monophosphate dehydrogenase (485 aa).

CBS domains lie at 99 to 154 and 156 to 215; these read IVED…LVKE and MTKD…VRDE. Residues aspartate 247 and 294–296 each bind NAD(+); that span reads GIG. Residues glycine 296 and glycine 298 each coordinate K(+). Serine 299 serves as a coordination point for IMP. Cysteine 301 is a binding site for K(+). The active-site Thioimidate intermediate is the cysteine 301. IMP is bound by residues 334 to 336, 357 to 358, and 381 to 385; these read DGG, GN, and YRGMG. The Proton acceptor role is filled by arginine 397. Glutamate 412 contacts IMP. 3 residues coordinate K(+): glutamate 466, serine 467, and histidine 468.

Belongs to the IMPDH/GMPR family. In terms of assembly, homotetramer. It depends on K(+) as a cofactor.

The catalysed reaction is IMP + NAD(+) + H2O = XMP + NADH + H(+). The protein operates within purine metabolism; XMP biosynthesis via de novo pathway; XMP from IMP: step 1/1. Its activity is regulated as follows. Mycophenolic acid (MPA) is a non-competitive inhibitor that prevents formation of the closed enzyme conformation by binding to the same site as the amobile flap. In contrast, mizoribine monophosphate (MZP) is a competitive inhibitor that induces the closed conformation. MPA is a potent inhibitor of mammalian IMPDHs but a poor inhibitor of the bacterial enzymes. MZP is a more potent inhibitor of bacterial IMPDH. In terms of biological role, catalyzes the conversion of inosine 5'-phosphate (IMP) to xanthosine 5'-phosphate (XMP), the first committed and rate-limiting step in the de novo synthesis of guanine nucleotides, and therefore plays an important role in the regulation of cell growth. The polypeptide is Inosine-5'-monophosphate dehydrogenase (Pyrococcus abyssi (strain GE5 / Orsay)).